Consider the following 190-residue polypeptide: Ohanin (190 aa).

A signal peptide spans 1–20 (MLLFTLCFFADQENGGKALA). Residues 21–127 (SPPGNWQKAD…RIWQKGLWWL (107 aa)) enclose the B30.2/SPRY domain. The propeptide occupies 128–190 (RRLETDSDKL…IGARVSLANL (63 aa)).

Expressed by the venom gland.

It is found in the secreted. Neurotoxin that produces dose-dependent hypolocomotion and hyperalgesia in mice. May directly act on the central nervous system, as it is 6500-fold more potent when administered intracerebroventricularly than intraperitoneal. In Ophiophagus hannah (King cobra), this protein is Ohanin.